Here is a 644-residue protein sequence, read N- to C-terminus: N-acetylgalactosaminyltransferase 4 (644 aa).

Residues 1–13 (MAIKKRYVKRLLR) are Cytoplasmic-facing. Residues 14–34 (KVVLLLVVIVTVSLVTTLVVE) form a helical; Signal-anchor for type II membrane protein membrane-spanning segment. The Lumenal portion of the chain corresponds to 35-644 (RRMKNAAELT…MLDTFYDGLK (610 aa)). 2 N-linked (GlcNAc...) asparagine glycosylation sites follow: asparagine 157 and asparagine 179. A catalytic subdomain A region spans residues 177-288 (LPNISVIFIF…YNWLPPLIEP (112 aa)). Residues aspartate 218 and arginine 249 each coordinate substrate. Residue aspartate 272 participates in Mn(2+) binding. Residue serine 273 participates in substrate binding. Histidine 274 lines the Mn(2+) pocket. Residues 345–407 (PYRSPVMMGG…PCSRVAHIFR (63 aa)) are catalytic subdomain B. Tryptophan 376 lines the substrate pocket. Residue histidine 404 coordinates Mn(2+). Arginine 407 serves as a coordination point for substrate. Residues 496-629 (AAGIIQNVAN…GNDRQRWEFG (134 aa)) form the Ricin B-type lectin domain. Cysteine 509 and cysteine 526 form a disulfide bridge. 2 N-linked (GlcNAc...) asparagine glycosylation sites follow: asparagine 529 and asparagine 565. 2 cysteine pairs are disulfide-bonded: cysteine 556-cysteine 573 and cysteine 600-cysteine 617. N-linked (GlcNAc...) asparagine glycosylation is present at asparagine 632.

It belongs to the glycosyltransferase 2 family. GalNAc-T subfamily. Requires Mn(2+) as cofactor. In terms of tissue distribution, expressed in developing oocytes and egg chambers. During embryonic stages 9-11, expressed in the primordium of the foregut, midgut and hindgut. During embryonic stages 12-13, shows specific expression in the proventriculus that continues until the end of embryogenesis. In third instar larvae, ubiquitously expressed in wing, eye-antennal, leg and haltere imaginal disks.

The protein localises to the golgi apparatus membrane. The enzyme catalyses L-seryl-[protein] + UDP-N-acetyl-alpha-D-galactosamine = a 3-O-[N-acetyl-alpha-D-galactosaminyl]-L-seryl-[protein] + UDP + H(+). It carries out the reaction L-threonyl-[protein] + UDP-N-acetyl-alpha-D-galactosamine = a 3-O-[N-acetyl-alpha-D-galactosaminyl]-L-threonyl-[protein] + UDP + H(+). It functions in the pathway protein modification; protein glycosylation. Its function is as follows. Glycopeptide transferase involved in O-linked oligosaccharide biosynthesis, which catalyzes the transfer of an N-acetyl-D-galactosamine residue to an already glycosylated peptide. In contrast to other proteins of the family, it does not act as a peptide transferase that transfers GalNAc onto serine or threonine residue on the protein receptor, but instead requires the prior addition of a GalNAc on a peptide before adding additional GalNAc moieties. Some peptide transferase activity is however not excluded, considering that its appropriate peptide substrate may remain unidentified. Prefers the diglycosylated Muc5AC-3/13 as substrate. This is N-acetylgalactosaminyltransferase 4 from Drosophila melanogaster (Fruit fly).